The following is a 272-amino-acid chain: NH(3)-dependent NAD(+) synthetase (272 aa).

45-52 (GISGGQDS) is an ATP binding site. Asp-51 lines the Mg(2+) pocket. Arg-138 serves as a coordination point for deamido-NAD(+). ATP is bound at residue Thr-158. Glu-163 provides a ligand contact to Mg(2+). 2 residues coordinate deamido-NAD(+): Lys-171 and Asp-178. The ATP site is built by Lys-187 and Thr-209. A deamido-NAD(+)-binding site is contributed by 258-259 (HK).

This sequence belongs to the NAD synthetase family. Homodimer.

The catalysed reaction is deamido-NAD(+) + NH4(+) + ATP = AMP + diphosphate + NAD(+) + H(+). The protein operates within cofactor biosynthesis; NAD(+) biosynthesis; NAD(+) from deamido-NAD(+) (ammonia route): step 1/1. In terms of biological role, catalyzes the ATP-dependent amidation of deamido-NAD to form NAD. Uses ammonia as a nitrogen source. This is NH(3)-dependent NAD(+) synthetase from Bacillus thuringiensis subsp. konkukian (strain 97-27).